Here is a 488-residue protein sequence, read N- to C-terminus: ATP synthase subunit beta, chloroplastic (488 aa).

G170–T177 is an ATP binding site.

The protein belongs to the ATPase alpha/beta chains family. F-type ATPases have 2 components, CF(1) - the catalytic core - and CF(0) - the membrane proton channel. CF(1) has five subunits: alpha(3), beta(3), gamma(1), delta(1), epsilon(1). CF(0) has four main subunits: a(1), b(1), b'(1) and c(9-12).

The protein resides in the plastid. Its subcellular location is the chloroplast thylakoid membrane. The enzyme catalyses ATP + H2O + 4 H(+)(in) = ADP + phosphate + 5 H(+)(out). In terms of biological role, produces ATP from ADP in the presence of a proton gradient across the membrane. The catalytic sites are hosted primarily by the beta subunits. The protein is ATP synthase subunit beta, chloroplastic of Picea abies (Norway spruce).